Here is a 703-residue protein sequence, read N- to C-terminus: Prolyl 3-hydroxylase 2 (703 aa).

Residues 1-21 form the signal peptide; that stretch reads MRESTWVSLLLLLLLPTPQRG. The disordered stretch occupies residues 17-40; that stretch reads TPQRGGPQDGRRSPEPEPERGPLQ. Residues 25–36 show a composition bias toward basic and acidic residues; sequence DGRRSPEPEPER. TPR repeat units follow at residues 42–75, 144–177, 205–238, and 301–334; these read FDLL…HRRL, RVPY…NPEH, HLES…YFNE, and PLHY…HPDN. N-linked (GlcNAc...) asparagine glycans are attached at residues asparagine 444 and asparagine 544. Positions 552–666 constitute a Fe2OG dioxygenase domain; sequence THMVCRTALS…RCAVALWFTL (115 aa). Positions 575, 577, and 647 each coordinate Fe cation. Arginine 657 is a catalytic residue. Residues 700–703 carry the Prevents secretion from ER motif; that stretch reads KDEL.

This sequence belongs to the leprecan family. It depends on Fe cation as a cofactor. L-ascorbate is required as a cofactor. Detected in kidney. Detected on kidney tubular cells, pancreas acinar cells, Schwann cells of the peripheral nerve in the pinna, and in tunica adventitia, the smooth muscle layer of the aortic wall (at protein level). Detected in lung, skeletal muscle and kidney. Detected in kidney glomeruli and in prehypertrophic regions of long bone from neonates. In the eye, detected in the epithelial layer of the cornea and at lower levels in the sclera at the posterior end of the eye.

Its subcellular location is the endoplasmic reticulum. It localises to the sarcoplasmic reticulum. The protein resides in the golgi apparatus. It carries out the reaction L-prolyl-[collagen] + 2-oxoglutarate + O2 = trans-3-hydroxy-L-prolyl-[collagen] + succinate + CO2. Functionally, prolyl 3-hydroxylase that catalyzes the post-translational formation of 3-hydroxyproline on collagens. Contributes to proline 3-hydroxylation of collagen COL4A1 and COL1A1 in tendons, the eye sclera and in the eye lens capsule. Has high activity with the type IV collagen COL4A1, and lower activity with COL1A1. Catalyzes hydroxylation of the first Pro in Gly-Pro-Hyp sequences where Hyp is 4-hydroxyproline. Has no activity on substrates that have proline instead of 4-hydroxyproline in the third position. This Mus musculus (Mouse) protein is Prolyl 3-hydroxylase 2.